The sequence spans 428 residues: Glutamyl-tRNA reductase (428 aa).

Substrate-binding positions include 49–52 (TCNR), Ser109, 114–116 (EGQ), and Gln120. The active-site Nucleophile is the Cys50. 189–194 (GAGKMS) provides a ligand contact to NADP(+).

Belongs to the glutamyl-tRNA reductase family. Homodimer.

The enzyme catalyses (S)-4-amino-5-oxopentanoate + tRNA(Glu) + NADP(+) = L-glutamyl-tRNA(Glu) + NADPH + H(+). It functions in the pathway porphyrin-containing compound metabolism; protoporphyrin-IX biosynthesis; 5-aminolevulinate from L-glutamyl-tRNA(Glu): step 1/2. It participates in porphyrin-containing compound metabolism; chlorophyll biosynthesis. Functionally, catalyzes the NADPH-dependent reduction of glutamyl-tRNA(Glu) to glutamate 1-semialdehyde (GSA). The sequence is that of Glutamyl-tRNA reductase from Trichormus variabilis (strain ATCC 29413 / PCC 7937) (Anabaena variabilis).